The following is a 334-amino-acid chain: G-protein coupled receptor 12 (334 aa).

Residues 1 to 48 (MNEDPKVNLSGLPRDCIEAGTPENISAAVPSQGSVVESEPELVVNPWD) lie on the Extracellular side of the membrane. Residues N8 and N24 are each glycosylated (N-linked (GlcNAc...) asparagine). Residues 49 to 69 (IVLCSSGTLICCENAVVVLII) traverse the membrane as a helical segment. Over 70–78 (FHSPSLRAP) the chain is Cytoplasmic. Residues 79-99 (MFLLIGSLALADLLAGLGLII) traverse the membrane as a helical segment. Residues 100–113 (NFVFAYLLQSEATK) are Extracellular-facing. The chain crosses the membrane as a helical span at residues 114–134 (LVTIGLIVASFSASVCSLLAI). Topologically, residues 135-158 (TVDRYLSLYYALTYHSERTVTFTY) are cytoplasmic. A helical membrane pass occupies residues 159-179 (VMLVMLWGTSTCLGLLPVMGW). The Extracellular segment spans residues 180-199 (NCLRDESTCSVVRPLTKNNA). The chain crosses the membrane as a helical span at residues 200–220 (AILSISFLFMFALMLQLYIQI). The Cytoplasmic portion of the chain corresponds to 221 to 252 (CKIVMRHAHQIALQHHFLATSHYVTTRKGIST). The helical transmembrane segment at 253 to 273 (LALILGTFAACWMPFTLYSLI) threads the bilayer. Residues 274-282 (ADYTYPSIY) lie on the Extracellular side of the membrane. A helical transmembrane segment spans residues 283–303 (TYATLLPATYNSIINPVIYAF). Over 304–334 (RNQEIQKALCLICCGCIPNTLSQRARSPSDV) the chain is Cytoplasmic. A lipid anchor (S-palmitoyl cysteine) is attached at C317. Residues S330 and S332 each carry the phosphoserine modification.

The protein belongs to the G-protein coupled receptor 1 family. Expressed in the brain, pituitary gland and testis.

The protein localises to the cell membrane. Receptor with constitutive G(s) signaling activity that activates cyclic AMP. Promotes neurite outgrowth and blocks myelin inhibition in neurons. This is G-protein coupled receptor 12 (Gpr12) from Rattus norvegicus (Rat).